A 1019-amino-acid chain; its full sequence is UPF0182 protein Krad_1193 (1019 aa).

A run of 7 helical transmembrane segments spans residues 19 to 39 (GAAL…VVGA), 61 to 81 (LWLQ…AVAV), 115 to 135 (RLVV…VAMS), 169 to 189 (WLAF…IAGL), 213 to 233 (VHLA…YWLD), 264 to 284 (AILA…AVGT), and 291 to 311 (IGTG…PWAV). Disordered regions lie at residues 897–934 (GNSG…ATGD) and 977–1019 (DAAS…TPTP). Over residues 977 to 1005 (DAASAAEARLERSGTSGPTSSSSPSASSA) the composition is skewed to low complexity. Positions 1006–1019 (PPVPGETPAATPTP) are enriched in pro residues.

The protein belongs to the UPF0182 family.

The protein localises to the cell membrane. This chain is UPF0182 protein Krad_1193, found in Kineococcus radiotolerans (strain ATCC BAA-149 / DSM 14245 / SRS30216).